A 300-amino-acid polypeptide reads, in one-letter code: MAKPLSISSHPSVHLAWRAYFEMTKPKVVALMLLTVLVGMCLAMPTILPVKPLVAGLLGIAMMAGSAAALNHLIDRRIDGMMARTYNRPLPKGRVSATRALLFAALLGCLGFVILYVFTNPLTAWLTFASLIGYALIYTAYLKRATPQNIVIGGLAGAMPPLLGWTAVTNQFHGHALLLVIIIFLWTPPHFWALAIHRRAEYAKVDIPMLPVTHGVEFTKTCILLYTILLAMACLLPVLVGMSGPLYFVCSSLLSTGFIYKAWQLKYQDSEGLAMQVFRFSIYHLMLLFMALLLDHYLWA.

The next 9 membrane-spanning stretches (helical) occupy residues 28–48, 54–74, 100–120, 122–142, 149–169, 176–196, 222–242, 243–263, and 280–300; these read VVALMLLTVLVGMCLAMPTIL, VAGLLGIAMMAGSAAALNHLI, ALLFAALLGCLGFVILYVFTN, LTAWLTFASLIGYALIYTAYL, NIVIGGLAGAMPPLLGWTAVT, ALLLVIIIFLWTPPHFWALAI, CILLYTILLAMACLLPVLVGM, SGPLYFVCSSLLSTGFIYKAW, and FSIYHLMLLFMALLLDHYLWA.

It belongs to the UbiA prenyltransferase family. Protoheme IX farnesyltransferase subfamily.

The protein resides in the cell inner membrane. It carries out the reaction heme b + (2E,6E)-farnesyl diphosphate + H2O = Fe(II)-heme o + diphosphate. It participates in porphyrin-containing compound metabolism; heme O biosynthesis; heme O from protoheme: step 1/1. Its function is as follows. Converts heme B (protoheme IX) to heme O by substitution of the vinyl group on carbon 2 of heme B porphyrin ring with a hydroxyethyl farnesyl side group. In Shewanella sp. (strain ANA-3), this protein is Protoheme IX farnesyltransferase 1.